Reading from the N-terminus, the 331-residue chain is Probable protein phosphatase 2C 72 (331 aa).

A PPM-type phosphatase domain is found at 43–324 (LGSVCSIQGT…DDITVICLFL (282 aa)). Mn(2+) is bound by residues D78, G79, D268, and D315.

It belongs to the PP2C family. Mg(2+) is required as a cofactor. Mn(2+) serves as cofactor.

It catalyses the reaction O-phospho-L-seryl-[protein] + H2O = L-seryl-[protein] + phosphate. It carries out the reaction O-phospho-L-threonyl-[protein] + H2O = L-threonyl-[protein] + phosphate. The sequence is that of Probable protein phosphatase 2C 72 from Arabidopsis thaliana (Mouse-ear cress).